The primary structure comprises 267 residues: 4-hydroxy-tetrahydrodipicolinate reductase (267 aa).

NAD(+)-binding positions include 8 to 13 (GAAGRM) and aspartate 34. An NADP(+)-binding site is contributed by arginine 35. Residues 98 to 100 (GTT) and 122 to 125 (AANF) each bind NAD(+). Histidine 155 (proton donor/acceptor) is an active-site residue. A (S)-2,3,4,5-tetrahydrodipicolinate-binding site is contributed by histidine 156. The active-site Proton donor is lysine 159. Residue 165-166 (GT) participates in (S)-2,3,4,5-tetrahydrodipicolinate binding.

This sequence belongs to the DapB family.

It localises to the cytoplasm. The catalysed reaction is (S)-2,3,4,5-tetrahydrodipicolinate + NAD(+) + H2O = (2S,4S)-4-hydroxy-2,3,4,5-tetrahydrodipicolinate + NADH + H(+). It carries out the reaction (S)-2,3,4,5-tetrahydrodipicolinate + NADP(+) + H2O = (2S,4S)-4-hydroxy-2,3,4,5-tetrahydrodipicolinate + NADPH + H(+). It functions in the pathway amino-acid biosynthesis; L-lysine biosynthesis via DAP pathway; (S)-tetrahydrodipicolinate from L-aspartate: step 4/4. In terms of biological role, catalyzes the conversion of 4-hydroxy-tetrahydrodipicolinate (HTPA) to tetrahydrodipicolinate. This chain is 4-hydroxy-tetrahydrodipicolinate reductase, found in Pseudomonas putida (strain ATCC 700007 / DSM 6899 / JCM 31910 / BCRC 17059 / LMG 24140 / F1).